The sequence spans 566 residues: Glutamate--tRNA ligase (566 aa).

Positions 93 to 103 (PNPDYTIHLGN) match the 'HIGH' region motif.

The protein belongs to the class-I aminoacyl-tRNA synthetase family. Glutamate--tRNA ligase type 2 subfamily.

Its subcellular location is the cytoplasm. The catalysed reaction is tRNA(Glu) + L-glutamate + ATP = L-glutamyl-tRNA(Glu) + AMP + diphosphate. Its function is as follows. Catalyzes the attachment of glutamate to tRNA(Glu) in a two-step reaction: glutamate is first activated by ATP to form Glu-AMP and then transferred to the acceptor end of tRNA(Glu). This chain is Glutamate--tRNA ligase, found in Staphylothermus marinus (strain ATCC 43588 / DSM 3639 / JCM 9404 / F1).